Here is a 959-residue protein sequence, read N- to C-terminus: MTQTLSQLEHSEAFIERHIGSSAQQQQQLLEAVGARSLNALIQQIVPADIQLPAPPPVGDAATEHQALAELKAIASQNQRYKSYIGMGYSAVLTPPVILRNMLENPGWYTAYTPYQPEVSQGRLEALLNFQTVTLDLTGLDLASASLLDEATAAAEAMALAKRASKLKDANRFFVADDVHPQTLDVVRTRAATFGFEVIVDKAEKVLELQGVFGVLLQQVGTTGELHDYSALLAELKNRKIGTSVAADIMALVLLTAPGKQGADVVFGSAQRFGVPMGYGGPHAAFFACRDEFKRSMPGRIIGVSRDAAGNTALRMAMQTREQHIRREKANSNICTSQVLLANIASLYAVYHGPQGLQRIAGRIHRLTDILAAGLQQAGLQLRHKTWFDTLTVEVKDKAAVLERALSFGINLRTDIHGAVGITLDEATSREDVQTLFALLAGDNHGLDIDALDAAVSKNSQSIPAGMLRKDPILTHPVFNSYHSETEMMRYMHRLERKDLALNQAMIPLGSCTMKLNAAAEMIPITWPEFSELHPFCPPEQAAGYKQMIGQLSQWLVQLTGYDAVCMQPNSGAQGEYAGLLAIRHYHESRNESGRHICLIPSSAHGTNPASAQMAGMSVVVVACDKNGNIDLHDLRVKAEQAGEELSCIMVTYPSTHGVYEETIREVCQIVHQFGGQVYLDGANMNAQVGITTPGYIGADVSHLNLHKTFCIPHGGGGPGMGPIGVKAHLAPFVPGHSVVQIDGVLTQQGAVSAAPFGSASILPISWMYIRMMGAEGLKQASQVAILNANYIATRLKDAYPVLYTGRDHRVAHECILDIRPLKEETGISEMDIAKRLIDYGFHAPTMSFPVAGTLMVEPTESESKVELDRFIDAMLAIRSEIDRVAKGEWPLEDNPLVNAPHIQAELVSDWQHAYSRELAVFPIAGVRENKYWPSVKRLDDVYGDRNLFCSCVPMSEYE.

An N6-(pyridoxal phosphate)lysine modification is found at Lys-708.

This sequence belongs to the GcvP family. The glycine cleavage system is composed of four proteins: P, T, L and H. Pyridoxal 5'-phosphate serves as cofactor.

It carries out the reaction N(6)-[(R)-lipoyl]-L-lysyl-[glycine-cleavage complex H protein] + glycine + H(+) = N(6)-[(R)-S(8)-aminomethyldihydrolipoyl]-L-lysyl-[glycine-cleavage complex H protein] + CO2. In terms of biological role, the glycine cleavage system catalyzes the degradation of glycine. The P protein binds the alpha-amino group of glycine through its pyridoxal phosphate cofactor; CO(2) is released and the remaining methylamine moiety is then transferred to the lipoamide cofactor of the H protein. In Serratia proteamaculans (strain 568), this protein is Glycine dehydrogenase (decarboxylating).